A 147-amino-acid polypeptide reads, in one-letter code: Large ribosomal subunit protein uL11 (147 aa).

The protein belongs to the universal ribosomal protein uL11 family. In terms of assembly, part of the ribosomal stalk of the 50S ribosomal subunit. Interacts with L10 and the large rRNA to form the base of the stalk. L10 forms an elongated spine to which L12 dimers bind in a sequential fashion forming a multimeric L10(L12)X complex. Post-translationally, one or more lysine residues are methylated.

In terms of biological role, forms part of the ribosomal stalk which helps the ribosome interact with GTP-bound translation factors. This chain is Large ribosomal subunit protein uL11, found in Metamycoplasma arthritidis (strain 158L3-1) (Mycoplasma arthritidis).